The sequence spans 160 residues: Protein max (160 aa).

Over residues M1–E13 the composition is skewed to acidic residues. The segment at M1–K40 is disordered. Position 2 is an N-acetylserine (S2). A phosphoserine mark is found at S2 and S11. The 52-residue stretch at D23–M74 folds into the bHLH domain. Over residues N29–K40 the composition is skewed to basic and acidic residues. Position 66 is an N6-acetyllysine (K66). A leucine-zipper region spans residues H81–L102. The disordered stretch occupies residues E103–S160. S107 is modified (phosphoserine). The span at S107–S132 shows a compositional bias: polar residues. Residues R152–R156 carry the Nuclear localization signal motif. N6-acetyllysine occurs at positions 153 and 154.

Belongs to the MAX family. In terms of assembly, efficient DNA binding requires dimerization with another bHLH protein. Binds DNA as a heterodimer with MYC or MAD. Part of the E2F6.com-1 complex in G0 phase composed of E2F6, MGA, MAX, TFDP1, CBX3, BAT8, EUHMTASE1, RING1, RNF2, MBLR, L3MBTL2 and YAF2. Component of some MLL1/MLL complex, at least composed of the core components KMT2A/MLL1, ASH2L, HCFC1/HCF1, WDR5 and RBBP5, as well as the facultative components BACC1, CHD8, E2F6, HSP70, INO80C, KANSL1, LAS1L, MAX, MCRS1, MGA, MYST1/MOF, PELP1, PHF20, PRP31, RING2, RUVB1/TIP49A, RUVB2/TIP49B, SENP3, TAF1, TAF4, TAF6, TAF7, TAF9 and TEX10. Interacts with SPAG9. The heterodimer MYC:MAX interacts with ABI1; the interaction may enhance MYC:MAX transcriptional activity. Post-translationally, reversible lysine acetylation might regulate the nuclear-cytoplasmic shuttling of specific Max complexes. As to expression, high levels found in the brain, heart and lung while lower levels are seen in the liver, kidney and skeletal muscle.

It localises to the nucleus. Its subcellular location is the cell projection. It is found in the dendrite. In terms of biological role, transcription regulator. Forms a sequence-specific DNA-binding protein complex with MYC or MAD which recognizes the core sequence 5'-CAC[GA]TG-3'. The MYC:MAX complex is a transcriptional activator, whereas the MAD:MAX complex is a repressor. May repress transcription via the recruitment of a chromatin remodeling complex containing H3 'Lys-9' histone methyltransferase activity. Represses MYC transcriptional activity from E-box elements. This chain is Protein max, found in Homo sapiens (Human).